The chain runs to 579 residues: Mitogen-activated protein kinase kinase kinase 7 (579 aa).

Residues 1-300 (MSTASAASSS…FPGADEPLQY (300 aa)) are interaction with MAPK8IP1. The 256-residue stretch at 36-291 (IEVEEVVGRG…KIMTHLMRYF (256 aa)) folds into the Protein kinase domain. ATP is bound by residues 42-50 (VGRGAFGVV) and lysine 63. Lysine 72 is covalently cross-linked (Glycyl lysine isopeptide (Lys-Gly) (interchain with G-Cter in ubiquitin)). Catalysis depends on aspartate 156, which acts as the Proton acceptor. Lysine 158 is covalently cross-linked (Glycyl lysine isopeptide (Lys-Gly) (interchain with G-Cter in ubiquitin)). Residues threonine 184 and threonine 187 each carry the phosphothreonine; by autocatalysis modification. A Phosphoserine; by autocatalysis modification is found at serine 192. A Glycyl lysine isopeptide (Lys-Gly) (interchain with G-Cter in ubiquitin) cross-link involves residue lysine 209. Disordered stretches follow at residues 301–338 (PCQY…MEQV) and 354–391 (KNQA…MSAD). Positions 306-338 (DEGQSNSATSTGSFMDIASTNTSNKSDTNMEQV) are enriched in polar residues. The segment covering 361 to 375 (SESGRLSLGASRGSS) has biased composition (low complexity). A phosphoserine mark is found at serine 367, serine 389, and serine 412. The segment covering 416 to 425 (LTVTGTEPGQ) has biased composition (polar residues). The interval 416–466 (LTVTGTEPGQVSSRSSSPSVRMITTSGPTSEKPARSHPWTPDDSTDTNGSD) is disordered. The span at 426–436 (VSSRSSSPSVR) shows a compositional bias: low complexity. The residue at position 428 (serine 428) is a Phosphoserine.

This sequence belongs to the protein kinase superfamily. STE Ser/Thr protein kinase family. MAP kinase kinase kinase subfamily. In terms of assembly, can form homodimer. Binds both upstream activators and downstream substrates in multimolecular complexes. Interacts with TAB1/MAP3K7IP1, TAB2/MAP3K7IP2 and TAB3/MAP3K7IP3. Identified in the TRIKA2 complex composed of MAP3K7/TAK1, TAB1/MAP3K7IP1 and TAB2/MAP3K7IP2. Interacts with PPM1L and PPM1B/PP2CB. Interaction with PP2A and PPP6C leads to its repressed activity. Interacts with TRAF6 and TAB1/MAP3K7IP1; during IL-1 signaling. Interacts with TAOK1 and TAOK2; interaction with TAOK2 interferes with MAP3K7 interaction with IKKA, thus preventing NF-kappa-B activation. Interacts with DYNC2I2 (via WD domains). Interacts with CYLD and RBCK1. Interacts with TGFBR1; induces MAP3K7/TAK1 activation by TRAF6. Interacts with MAPK8IP1 and SMAD6. Interacts with isoform 1 of VRK2. Interacts with DAB2; the interaction is induced by TGF-beta stimulation and may mediate TGF-beta stimulated JNK activation. Interacts with TRIM5. Part of a complex containing ITCH, NDFIP1 and MAP3K7. Interacts with PLEKHM1 (via N- and C-terminus). Interacts with TRIM8. Found in a complex with SH3RF1, RAC2, MAP2K7/MKK7, MAPK8IP1/JIP1, MAPK8/JNK1 and MAPK9/JNK2. Interacts with SASH1. Interacts with RIPK1. Mg(2+) serves as cofactor. In terms of processing, association with TAB1/MAP3K7IP1 promotes autophosphorylation and subsequent activation. Association with TAB2/MAP3K7IP2, itself associated with free unanchored Lys-63 polyubiquitin chain, promotes autophosphorylation and subsequent activation of MAP3K7. Dephosphorylation at Thr-187 by PP2A and PPP6C leads to inactivation. 'Lys-48'-linked polyubiquitination at Lys-72 is induced by TNFalpha, and leads to proteasomal degradation. Undergoes 'Lys-48'-linked polyubiquitination catalyzed by ITCH. 'Lys-63'-linked polyubiquitination at Lys-158 by TRIM8 does not lead to proteasomal degradation but contributes to autophosphorylation and activation. Deubiquitinated by CYLD, a protease that selectively cleaves 'Lys-63'-linked ubiquitin chains.Deubiquitinated by USP19; leading to negative regulation of TNF-alpha- and IL-1beta-triggered NF-kappa-B activation.

Its subcellular location is the cytoplasm. The protein localises to the cell membrane. The catalysed reaction is L-seryl-[protein] + ATP = O-phospho-L-seryl-[protein] + ADP + H(+). The enzyme catalyses L-threonyl-[protein] + ATP = O-phospho-L-threonyl-[protein] + ADP + H(+). Activated by pro-inflammatory cytokines and in response to physical and chemical stresses, including osmotic stress, oxidative stress, arsenic and ultraviolet light irradiation. Activated by 'Lys-63'-linked polyubiquitination and by autophosphorylation. Association with TAB1/MAP3K7IP1 and TAB2/MAP3K7IP2 promotes activation through autophosphorylation, whereas PPM1B/PP2CB, PP2A and PPP6C dephosphorylation leads to inactivation. Ceramides are also able to activate MAP3K7/TAK1. Serine/threonine kinase which acts as an essential component of the MAP kinase signal transduction pathway. Plays an important role in the cascades of cellular responses evoked by changes in the environment. Mediates signal transduction of TRAF6, various cytokines including interleukin-1 (IL-1), transforming growth factor-beta (TGFB), TGFB-related factors like BMP2 and BMP4, toll-like receptors (TLR), tumor necrosis factor receptor CD40 and B-cell receptor (BCR). Once activated, acts as an upstream activator of the MKK/JNK signal transduction cascade and the p38 MAPK signal transduction cascade through the phosphorylation and activation of several MAP kinase kinases like MAP2K1/MEK1, MAP2K3/MKK3, MAP2K6/MKK6 and MAP2K7/MKK7. These MAP2Ks in turn activate p38 MAPKs and c-jun N-terminal kinases (JNKs); both p38 MAPK and JNK pathways control the transcription factors activator protein-1 (AP-1). Independently of MAP2Ks and p38 MAPKs, acts as a key activator of NF-kappa-B by promoting activation of the I-kappa-B-kinase (IKK) core complex. Mechanistically, recruited to polyubiquitin chains of RIPK2 and IKBKG/NEMO via TAB2/MAP3K7IP2 and TAB3/MAP3K7IP3, and catalyzes phosphorylation and activation of IKBKB/IKKB component of the IKK complex, leading to NF-kappa-B activation. In osmotic stress signaling, plays a major role in the activation of MAPK8/JNK1, but not that of NF-kappa-B. Promotes TRIM5 capsid-specific restriction activity. Phosphorylates RIPK1 at 'Ser-321' which positively regulates RIPK1 interaction with RIPK3 to promote necroptosis but negatively regulates RIPK1 kinase activity and its interaction with FADD to mediate apoptosis. Phosphorylates STING1 in response to cGAMP-activation, promoting association between STEEP1 and STING1 and STING1 translocation to COPII vesicles. This Mus musculus (Mouse) protein is Mitogen-activated protein kinase kinase kinase 7 (Map3k7).